A 143-amino-acid chain; its full sequence is Large ribosomal subunit protein uL13 (143 aa).

Belongs to the universal ribosomal protein uL13 family. As to quaternary structure, part of the 50S ribosomal subunit.

This protein is one of the early assembly proteins of the 50S ribosomal subunit, although it is not seen to bind rRNA by itself. It is important during the early stages of 50S assembly. The protein is Large ribosomal subunit protein uL13 of Dehalococcoides mccartyi (strain ATCC BAA-2266 / KCTC 15142 / 195) (Dehalococcoides ethenogenes (strain 195)).